Consider the following 107-residue polypeptide: Replication initiation control protein YabA (107 aa).

Zn(2+)-binding residues include His80, Cys82, Cys97, and Cys100.

This sequence belongs to the YabA family. In terms of assembly, homotetramer. Interacts with both DnaA and DnaN, acting as a bridge between these two proteins. Zn(2+) is required as a cofactor.

The protein localises to the cytoplasm. It localises to the nucleoid. In terms of biological role, involved in control of chromosome replication initiation. Inhibits the cooperative binding of DnaA to the oriC region, thus negatively regulating initiation of chromosome replication. Inhibits the ability of DnaA-ATP to form a helix on DNA; does not disassemble preformed DnaA-DNA helices. Decreases the residence time of DnaA on the chromosome at its binding sites (oriC, replication forks and promoter-binding sites). Tethers DnaA to the replication machinery via the DNA polymerase beta sliding clamp subunit (dnaN). Associates with oriC and other DnaA targets on the chromosome in a DnaA-dependent manner. The polypeptide is Replication initiation control protein YabA (Streptococcus gordonii (strain Challis / ATCC 35105 / BCRC 15272 / CH1 / DL1 / V288)).